The primary structure comprises 213 residues: Large ribosomal subunit protein bL25 (213 aa).

The segment covering 191–207 has biased composition (low complexity); it reads AEPTDAPTAPAAAPGAE. The tract at residues 191-213 is disordered; the sequence is AEPTDAPTAPAAAPGAEAPKDKA.

This sequence belongs to the bacterial ribosomal protein bL25 family. CTC subfamily. In terms of assembly, part of the 50S ribosomal subunit; part of the 5S rRNA/L5/L18/L25 subcomplex. Contacts the 5S rRNA. Binds to the 5S rRNA independently of L5 and L18.

Its function is as follows. This is one of the proteins that binds to the 5S RNA in the ribosome where it forms part of the central protuberance. The protein is Large ribosomal subunit protein bL25 of Polynucleobacter asymbioticus (strain DSM 18221 / CIP 109841 / QLW-P1DMWA-1) (Polynucleobacter necessarius subsp. asymbioticus).